An 81-amino-acid chain; its full sequence is Serine protease inhibitor Kazal-type 2 (81 aa).

Residues 1 to 21 form the signal peptide; it reads MALAVLRLALLLLAVTFAGPL. The Kazal-like domain occupies 27–81; the sequence is KYKTPFCARYQLPGCPRDFNPVCGTDMITYPNECTLCMKIRESGQNIKILRRGPC. Intrachain disulfides connect Cys33–Cys63, Cys41–Cys60, and Cys49–Cys81.

More abundant in epididymis than in testis.

The protein localises to the secreted. Its subcellular location is the cytoplasmic vesicle. It is found in the secretory vesicle. It localises to the acrosome. Functionally, strong inhibitor of acrosin in male and/or female genital tract. Also inhibits trypsin. Its function is as follows. As a strong inhibitor of acrosin, it is required for normal spermiogenesis. It probably hinders premature activation of proacrosin and other proteases, thus preventing the cascade of events leading to spermiogenesis defects. May be involved in the regulation of serine protease-dependent germ cell apoptosis. It also inhibits trypsin. The chain is Serine protease inhibitor Kazal-type 2 (SPINK2) from Macaca fascicularis (Crab-eating macaque).